The sequence spans 316 residues: Transaldolase A (316 aa).

The active-site Schiff-base intermediate with substrate is the Lys-131.

Belongs to the transaldolase family. Type 1 subfamily. As to quaternary structure, homodimer.

Its subcellular location is the cytoplasm. The enzyme catalyses D-sedoheptulose 7-phosphate + D-glyceraldehyde 3-phosphate = D-erythrose 4-phosphate + beta-D-fructose 6-phosphate. It functions in the pathway carbohydrate degradation; pentose phosphate pathway; D-glyceraldehyde 3-phosphate and beta-D-fructose 6-phosphate from D-ribose 5-phosphate and D-xylulose 5-phosphate (non-oxidative stage): step 2/3. Its function is as follows. Transaldolase is important for the balance of metabolites in the pentose-phosphate pathway. The sequence is that of Transaldolase A from Salmonella typhimurium (strain LT2 / SGSC1412 / ATCC 700720).